The following is a 350-amino-acid chain: Anthranilate phosphoribosyltransferase (350 aa).

5-phospho-alpha-D-ribose 1-diphosphate-binding positions include G94, 97–98 (GD), T102, 104–107 (NVST), 122–130 (KHGNRSVSS), and S134. G94 lines the anthranilate pocket. S106 lines the Mg(2+) pocket. Residue N125 participates in anthranilate binding. Position 180 (R180) interacts with anthranilate. The Mg(2+) site is built by D239 and E240.

It belongs to the anthranilate phosphoribosyltransferase family. As to quaternary structure, homodimer. Mg(2+) serves as cofactor.

The enzyme catalyses N-(5-phospho-beta-D-ribosyl)anthranilate + diphosphate = 5-phospho-alpha-D-ribose 1-diphosphate + anthranilate. The protein operates within amino-acid biosynthesis; L-tryptophan biosynthesis; L-tryptophan from chorismate: step 2/5. In terms of biological role, catalyzes the transfer of the phosphoribosyl group of 5-phosphorylribose-1-pyrophosphate (PRPP) to anthranilate to yield N-(5'-phosphoribosyl)-anthranilate (PRA). This is Anthranilate phosphoribosyltransferase from Pelobacter propionicus (strain DSM 2379 / NBRC 103807 / OttBd1).